The following is a 596-amino-acid chain: 3-hydroxy-3-methylglutaryl-coenzyme A reductase 1 (596 aa).

Residues 1–29 form a disordered region; sequence MDVRRRPVKPLYTSKDASAGEPLKQQEVS. 2 consecutive transmembrane segments (helical) span residues 41 to 61 and 83 to 103; these read LYLTNGLFFTMFFSVMYFLLV and AMVSLIASVIYLLGFFGIGFV. The tract at residues 104–183 is linker; it reads QSFVSRSNSD…SPIIMPALSE (80 aa). The interval 184–596 is catalytic; that stretch reads DDEEIIQSVV…YNRSIKDISK (413 aa). Residue E278 is the Charge relay system of the active site. A glycan (N-linked (GlcNAc...) asparagine) is linked at N342. The active-site Charge relay system is K410. N455 carries N-linked (GlcNAc...) asparagine glycosylation. Residue D486 is the Charge relay system of the active site. The Proton donor role is filled by H584. Residue N588 is glycosylated (N-linked (GlcNAc...) asparagine).

Belongs to the HMG-CoA reductase family. As to expression, expressed in flower primordia and anthers.

The protein localises to the endoplasmic reticulum membrane. The enzyme catalyses (R)-mevalonate + 2 NADP(+) + CoA = (3S)-3-hydroxy-3-methylglutaryl-CoA + 2 NADPH + 2 H(+). The protein operates within metabolic intermediate biosynthesis; (R)-mevalonate biosynthesis; (R)-mevalonate from acetyl-CoA: step 3/3. Catalyzes the synthesis of mevalonate. The specific precursor of all isoprenoid compounds present in plants. The sequence is that of 3-hydroxy-3-methylglutaryl-coenzyme A reductase 1 (HMG1) from Solanum tuberosum (Potato).